We begin with the raw amino-acid sequence, 390 residues long: MSDLKTMMLNFGPQHPAAHGVLRLVLEMDGEIIERADPHIGLLHRGTEKLIEHKTYLQALPYFDRLDYVSPMSQEHAYSLCVEKLLQCEVPIRAKYLRVLFCELTRILNHLLNISSQALDVGAMTPLLWLFEEREKILEFYERASGARFHAAYIRPGGVAADVPEGLIEDIAKFIEQFPQYIDDVDELLTENRIWKQRTVGISEISIKQALDWGFSGPMLRAAGLAWDLRKSQPYEIYDQLDFDIPVGQNGDCYDRYLVRMEEIRQSVSLVKQCIEKIPEGPVKTEDRKISPPPRTEMKRSMEALIHHFKLYSEGYHVPEGEAYAAVEAPKGEFGVYIVSDGTNRPYRCRIRAPGFAHLQALDFMAKGHMLADVAAIIGSLDIVFGEIDR.

The protein belongs to the complex I 49 kDa subunit family. As to quaternary structure, NDH-1 is composed of 14 different subunits. Subunits NuoB, C, D, E, F, and G constitute the peripheral sector of the complex.

It is found in the cell membrane. The catalysed reaction is a quinone + NADH + 5 H(+)(in) = a quinol + NAD(+) + 4 H(+)(out). NDH-1 shuttles electrons from NADH, via FMN and iron-sulfur (Fe-S) centers, to quinones in the respiratory chain. The immediate electron acceptor for the enzyme in this species is believed to be ubiquinone. Couples the redox reaction to proton translocation (for every two electrons transferred, four hydrogen ions are translocated across the cytoplasmic membrane), and thus conserves the redox energy in a proton gradient. This is NADH-quinone oxidoreductase subunit D from Wolbachia sp. subsp. Brugia malayi (strain TRS).